The primary structure comprises 1330 residues: Nephrocystin-3 (1330 aa).

A lipid anchor (N-myristoyl glycine) is attached at Gly2. The stretch at 83–207 (ELEYAAAEYE…QRLQAQGIQV (125 aa)) forms a coiled coil. TPR repeat units lie at residues 471-504 (IPEEDDFGDVLWDIHDEQEQMETFQQASNSAHEL), 885-918 (CLLNLFVSQNLYKRGHFAELLSYWQFVGKDKSAM), 920-942 (TEYFDSLKQYEKNCEGEDNMSCL), 943-976 (ADLYETLGRFLKDLGLLSQAIVPLQRSLEIRETA), 985-1018 (AQSLHQLASVYVQWKKFGNAEQLYKQALEISENA), 1027-1060 (ARELEALATLYQKQNKYEQAEHFRKKSFKIHQKA), 1093-1126 (ARTLNELGVLYYLQNNLETADQFLKRSLEMRERV), 1135-1168 (AQSLNNLAALCNEKKQYDKAEELYERALDIRRRA), 1177-1210 (AYTVKHLAILYKKMGKLDKAVPLYELAVEIRQKS), 1219-1252 (ATALVNLAVLYSQMKKHVEALPLYERALKIYEDS), and 1261-1294 (GETLKNLAVLSYEGGDFEKAAELYKRAMEIKEAE). Positions 1296–1330 (SLLGGKAPSRHSSSGDTFSLKTAHSPNVFLQQGQR) are disordered. A compositionally biased stretch (polar residues) spans 1305-1330 (RHSSSGDTFSLKTAHSPNVFLQQGQR).

In terms of assembly, interacts with NPHP1 and INVS/NPHP2. Interacts (when myristoylated) with UNC119 and UNC119B; interaction is required for localization to cilium. Interacts with CEP164. Component of a complex containing at least ANKS6, INVS, NEK8 and NPHP3. ANKS6 may organize complex assembly by linking INVS and NPHP3 to NEK8 and INVS may target the complex to the proximal ciliary axoneme. In terms of tissue distribution, widely expressed at low level. Expressed in heart, placenta, liver, skeletal muscle, kidney and pancreas. Expressed at very low level in brain and lung.

The protein localises to the cell projection. It is found in the cilium. Its function is as follows. Required for normal ciliary development and function. Inhibits disheveled-1-induced canonical Wnt-signaling activity and may also play a role in the control of non-canonical Wnt signaling which regulates planar cell polarity. Probably acts as a molecular switch between different Wnt signaling pathways. Required for proper convergent extension cell movements. In Homo sapiens (Human), this protein is Nephrocystin-3 (NPHP3).